The following is a 427-amino-acid chain: METFCFRVSFWVALLGCVISDNPESHSTNLSTHVDDFTTFRGTEFSLVVTTHRPTNLALPSNGSMHNYCPQQTKITSAFKYINTVISCTIFIVGMVGNATLLRIIYQNKCMRNGPNALIASLALGDLIYVVIDLPINVFKLLAGRWPFENHDFGVFLCKLFPFLQKSSVGITVLNLCALSVDRYRAVASWSRVQGIGIPLVTAIEIVSIWILSFILAIPEAIGFVMVPFEYKGEEHKTCMLNATSKFMEFYQDVKDWWLFGFYFCMPLVCTAIFYTLMTCEMLNRRNGSLRIALSEHLKQRREVAKTVFCLVVIFALCWFPLHLSRILKKTVYDEMDKNRCELLSFLLLMDYIGINLATMNSCINPIALYFVSKKFKNCFQSCLCCCCYQSKSLMTSVPMNGTSIQWKNHEQNNHNTERSSHKDSIN.

The signal sequence occupies residues 1–20 (METFCFRVSFWVALLGCVIS). Residues 21–80 (DNPESHSTNLSTHVDDFTTFRGTEFSLVVTTHRPTNLALPSNGSMHNYCPQQTKITSAFK) are Extracellular-facing. N29 and N62 each carry an N-linked (GlcNAc...) asparagine glycan. A helical membrane pass occupies residues 81–102 (YINTVISCTIFIVGMVGNATLL). Residues 103–112 (RIIYQNKCMR) are Cytoplasmic-facing. A helical membrane pass occupies residues 113-132 (NGPNALIASLALGDLIYVVI). Residues 133-159 (DLPINVFKLLAGRWPFENHDFGVFLCK) are Extracellular-facing. Cysteines 158 and 239 form a disulfide. The chain crosses the membrane as a helical span at residues 160 to 181 (LFPFLQKSSVGITVLNLCALSV). Residues 182–205 (DRYRAVASWSRVQGIGIPLVTAIE) lie on the Cytoplasmic side of the membrane. A helical transmembrane segment spans residues 206–229 (IVSIWILSFILAIPEAIGFVMVPF). Residues 230-256 (EYKGEEHKTCMLNATSKFMEFYQDVKD) are Extracellular-facing. Residues 257-278 (WWLFGFYFCMPLVCTAIFYTLM) traverse the membrane as a helical segment. Over 279-306 (TCEMLNRRNGSLRIALSEHLKQRREVAK) the chain is Cytoplasmic. A helical transmembrane segment spans residues 307 to 328 (TVFCLVVIFALCWFPLHLSRIL). Residues 329-347 (KKTVYDEMDKNRCELLSFL) lie on the Extracellular side of the membrane. A helical membrane pass occupies residues 348-372 (LLMDYIGINLATMNSCINPIALYFV). Residues 373–427 (SKKFKNCFQSCLCCCCYQSKSLMTSVPMNGTSIQWKNHEQNNHNTERSSHKDSIN) are Cytoplasmic-facing. At S425 the chain carries Phosphoserine.

Belongs to the G-protein coupled receptor 1 family. Endothelin receptor subfamily. EDNRA sub-subfamily. In terms of assembly, interacts with HDAC7 and KAT5.

The protein resides in the cell membrane. In terms of biological role, receptor for endothelin-1. Mediates its action by association with G proteins that activate a phosphatidylinositol-calcium second messenger system. The rank order of binding affinities for ET-A is: ET1 &gt; ET2 &gt;&gt; ET3. The sequence is that of Endothelin-1 receptor from Sus scrofa (Pig).